The sequence spans 487 residues: Glutamyl-tRNA(Gln) amidotransferase subunit A (487 aa).

Residues Lys79 and Ser154 each act as charge relay system in the active site. Residue Ser178 is the Acyl-ester intermediate of the active site.

The protein belongs to the amidase family. GatA subfamily. As to quaternary structure, heterotrimer of A, B and C subunits.

It catalyses the reaction L-glutamyl-tRNA(Gln) + L-glutamine + ATP + H2O = L-glutaminyl-tRNA(Gln) + L-glutamate + ADP + phosphate + H(+). Functionally, allows the formation of correctly charged Gln-tRNA(Gln) through the transamidation of misacylated Glu-tRNA(Gln) in organisms which lack glutaminyl-tRNA synthetase. The reaction takes place in the presence of glutamine and ATP through an activated gamma-phospho-Glu-tRNA(Gln). This chain is Glutamyl-tRNA(Gln) amidotransferase subunit A, found in Roseiflexus sp. (strain RS-1).